A 199-amino-acid polypeptide reads, in one-letter code: Protein ZNRD2 (199 aa).

At Ala-2 the chain carries N-acetylalanine. The Zn(2+) site is built by Cys-53, Cys-56, Cys-70, and Cys-73. Positions Leu-93 to Asp-148 are disordered. Ser-94 is subject to Phosphoserine. Positions Gly-127–Ala-137 are enriched in low complexity. The Nuclear export signal motif lies at Ser-173–Leu-194.

Homodimer. Zn(2+) is required as a cofactor. In terms of tissue distribution, expressed in the early postnatal brain.

Its subcellular location is the cytoplasm. Its function is as follows. Might play a role in mitosis. Could be a centromere-associated protein. Antigenic molecule. May induce anti-centromere antibodies. The chain is Protein ZNRD2 (Znrd2) from Mus musculus (Mouse).